The sequence spans 188 residues: Elongation factor P (188 aa).

Position 34 is an N6-(3,6-diaminohexanoyl)-5-hydroxylysine (Lys-34).

The protein belongs to the elongation factor P family. Post-translationally, may be beta-lysylated on the epsilon-amino group of Lys-34 by the combined action of EpmA and EpmB, and then hydroxylated on the C5 position of the same residue by EpmC (if this protein is present). Lysylation is critical for the stimulatory effect of EF-P on peptide-bond formation. The lysylation moiety may extend toward the peptidyltransferase center and stabilize the terminal 3-CCA end of the tRNA. Hydroxylation of the C5 position on Lys-34 may allow additional potential stabilizing hydrogen-bond interactions with the P-tRNA.

It is found in the cytoplasm. The protein operates within protein biosynthesis; polypeptide chain elongation. In terms of biological role, involved in peptide bond synthesis. Alleviates ribosome stalling that occurs when 3 or more consecutive Pro residues or the sequence PPG is present in a protein, possibly by augmenting the peptidyl transferase activity of the ribosome. Modification of Lys-34 is required for alleviation. The protein is Elongation factor P of Vibrio cholerae serotype O1 (strain ATCC 39541 / Classical Ogawa 395 / O395).